The sequence spans 247 residues: Proteasome subunit alpha (247 aa).

It belongs to the peptidase T1A family. As to quaternary structure, the 20S proteasome core is composed of 14 alpha and 14 beta subunits that assemble into four stacked heptameric rings, resulting in a barrel-shaped structure. The two inner rings, each composed of seven catalytic beta subunits, are sandwiched by two outer rings, each composed of seven alpha subunits. The catalytic chamber with the active sites is on the inside of the barrel. Has a gated structure, the ends of the cylinder being occluded by the N-termini of the alpha-subunits. Is capped at one or both ends by the proteasome regulatory ATPase, PAN.

It localises to the cytoplasm. With respect to regulation, the formation of the proteasomal ATPase PAN-20S proteasome complex, via the docking of the C-termini of PAN into the intersubunit pockets in the alpha-rings, triggers opening of the gate for substrate entry. Interconversion between the open-gate and close-gate conformations leads to a dynamic regulation of the 20S proteasome proteolysis activity. Component of the proteasome core, a large protease complex with broad specificity involved in protein degradation. The polypeptide is Proteasome subunit alpha (Methanosarcina acetivorans (strain ATCC 35395 / DSM 2834 / JCM 12185 / C2A)).